An 871-amino-acid chain; its full sequence is Alanine--tRNA ligase (871 aa).

Zn(2+) is bound by residues H561, H565, C665, and H669.

The protein belongs to the class-II aminoacyl-tRNA synthetase family. The cofactor is Zn(2+).

The protein localises to the cytoplasm. The enzyme catalyses tRNA(Ala) + L-alanine + ATP = L-alanyl-tRNA(Ala) + AMP + diphosphate. In terms of biological role, catalyzes the attachment of alanine to tRNA(Ala) in a two-step reaction: alanine is first activated by ATP to form Ala-AMP and then transferred to the acceptor end of tRNA(Ala). Also edits incorrectly charged Ser-tRNA(Ala) and Gly-tRNA(Ala) via its editing domain. In Dehalococcoides mccartyi (strain ATCC BAA-2266 / KCTC 15142 / 195) (Dehalococcoides ethenogenes (strain 195)), this protein is Alanine--tRNA ligase.